The chain runs to 235 residues: Small ribosomal subunit protein uS3 (235 aa).

The region spanning 39 to 107 is the KH type-2 domain; that stretch reads VRKFLLGQLS…PTKLNISEIR (69 aa).

This sequence belongs to the universal ribosomal protein uS3 family. In terms of assembly, part of the 30S ribosomal subunit. Forms a tight complex with proteins S10 and S14.

Its function is as follows. Binds the lower part of the 30S subunit head. Binds mRNA in the 70S ribosome, positioning it for translation. The polypeptide is Small ribosomal subunit protein uS3 (Blochmanniella floridana).